Here is a 397-residue protein sequence, read N- to C-terminus: F-box protein At3g28330 (397 aa).

In terms of domain architecture, F-box spans 6-56 (KKDMDFLTEDLWEIILARLPLKSIITTPKLVCKVWKSIIESRCFRDLFQSL).

The chain is F-box protein At3g28330 from Arabidopsis thaliana (Mouse-ear cress).